The primary structure comprises 753 residues: Transcription factor SOX-30 (753 aa).

2 disordered regions span residues 1–45 (MERA…TLSA) and 140–161 (QELG…TGPR). Positions 7-22 (EPQPQQRPLRPAPPLL) are enriched in pro residues. The segment at residues 337–405 (VKRPMNAFMV…KHREEFPGWV (69 aa)) is a DNA-binding region (HMG box). 2 disordered regions span residues 514-540 (AGPS…PVSL) and 726-753 (PTST…LRDL). Composition is skewed to polar residues over residues 531-540 (TVKQPTPVSL) and 726-739 (PTST…VNVT).

As to quaternary structure, interacts with CTNNB1, competitively inhibiting CTNNB1-TCF7L2/TCF4 interaction.

Its subcellular location is the nucleus. It localises to the cytoplasm. In terms of biological role, acts both as a transcriptional activator and a repressor. Binds to the DNA sequence 5'-ACAAT-3' and shows a preference for guanine residues surrounding this core motif. Binds to its own promoter and activates its own transcription. Required to activate the expression of postmeiotic genes involved in spermiogenesis. Binds to the promoter region of CTNNB1 and represses its transcription which leads to inhibition of Wnt signaling. Also inhibits Wnt signaling by binding to the CTNNB1 protein, preventing interaction of CTNNB1 with TCF7L2/TCF4. The sequence is that of Transcription factor SOX-30 (SOX30) from Macaca fascicularis (Crab-eating macaque).